Here is a 181-residue protein sequence, read N- to C-terminus: Large ribosomal subunit protein uL5 (181 aa).

Belongs to the universal ribosomal protein uL5 family. In terms of assembly, part of the 50S ribosomal subunit; part of the 5S rRNA/L5/L18/L25 subcomplex. Contacts the 5S rRNA and the P site tRNA. Forms a bridge to the 30S subunit in the 70S ribosome.

This is one of the proteins that bind and probably mediate the attachment of the 5S RNA into the large ribosomal subunit, where it forms part of the central protuberance. In the 70S ribosome it contacts protein S13 of the 30S subunit (bridge B1b), connecting the 2 subunits; this bridge is implicated in subunit movement. Contacts the P site tRNA; the 5S rRNA and some of its associated proteins might help stabilize positioning of ribosome-bound tRNAs. The chain is Large ribosomal subunit protein uL5 from Helicobacter pylori (strain J99 / ATCC 700824) (Campylobacter pylori J99).